A 359-amino-acid polypeptide reads, in one-letter code: DNA replication and repair protein RecF (359 aa).

30–37 (GPNGSGKT) serves as a coordination point for ATP.

It belongs to the RecF family.

It localises to the cytoplasm. In terms of biological role, the RecF protein is involved in DNA metabolism; it is required for DNA replication and normal SOS inducibility. RecF binds preferentially to single-stranded, linear DNA. It also seems to bind ATP. The polypeptide is DNA replication and repair protein RecF (Psychromonas ingrahamii (strain DSM 17664 / CCUG 51855 / 37)).